Reading from the N-terminus, the 140-residue chain is ATP synthase epsilon chain 1 (140 aa).

It belongs to the ATPase epsilon chain family. In terms of assembly, F-type ATPases have 2 components, CF(1) - the catalytic core - and CF(0) - the membrane proton channel. CF(1) has five subunits: alpha(3), beta(3), gamma(1), delta(1), epsilon(1). CF(0) has three main subunits: a, b and c.

The protein resides in the cell inner membrane. Produces ATP from ADP in the presence of a proton gradient across the membrane. The sequence is that of ATP synthase epsilon chain 1 from Photobacterium profundum (strain SS9).